A 457-amino-acid polypeptide reads, in one-letter code: tRNA (guanine(37)-N(1))-methyltransferase (457 aa).

Residues His-225, 263-264, 291-292, and Asn-358 each bind S-adenosyl-L-methionine; these read DL and DG.

This sequence belongs to the class I-like SAM-binding methyltransferase superfamily. TRM5/TYW2 family. As to quaternary structure, monomer.

Its subcellular location is the mitochondrion matrix. It is found in the nucleus. The protein resides in the cytoplasm. It carries out the reaction guanosine(37) in tRNA + S-adenosyl-L-methionine = N(1)-methylguanosine(37) in tRNA + S-adenosyl-L-homocysteine + H(+). In terms of biological role, specifically methylates the N1 position of guanosine-37 in various cytoplasmic and mitochondrial tRNAs. Methylation is not dependent on the nature of the nucleoside 5' of the target nucleoside. This is the first step in the biosynthesis of wybutosine (yW), a modified base adjacent to the anticodon of tRNAs and required for accurate decoding. The chain is tRNA (guanine(37)-N(1))-methyltransferase from Coprinopsis cinerea (strain Okayama-7 / 130 / ATCC MYA-4618 / FGSC 9003) (Inky cap fungus).